Here is a 138-residue protein sequence, read N- to C-terminus: MGAWLFILAVVVNCINLFGQVHFTILYADLEADYINPIELCSKVNKLITPEAALHGALSLLFLLNGYWFVFLLNLPVLAYNLNKIYNKVQLLDATEIFRTLGKHKRESFLKLGFHLLMFFFYLYRMIMALIAESGDDF.

At 2–6 (GAWLF) the chain is on the cytoplasmic side. Residues 7-27 (ILAVVVNCINLFGQVHFTILY) form a helical membrane-spanning segment. Topologically, residues 28 to 52 (ADLEADYINPIELCSKVNKLITPEA) are extracellular. Residues 53 to 73 (ALHGALSLLFLLNGYWFVFLL) form a helical membrane-spanning segment. The Cytoplasmic portion of the chain corresponds to 74–111 (NLPVLAYNLNKIYNKVQLLDATEIFRTLGKHKRESFLK). Residues 112 to 132 (LGFHLLMFFFYLYRMIMALIA) traverse the membrane as a helical segment. The Extracellular segment spans residues 133 to 138 (ESGDDF).

It belongs to the cornichon family.

Its subcellular location is the endoplasmic reticulum membrane. It localises to the golgi apparatus membrane. Its function is as follows. Could regulate export of the bud site and axial growth sites selection protein AXL2 and possibly other secretory proteins from the endoplasmic reticulum in COPII-coated vesicles. Seems to be required for axial budding pattern in haploid cells. In Saccharomyces cerevisiae (strain ATCC 204508 / S288c) (Baker's yeast), this protein is ER-derived vesicles protein ERV14 (ERV14).